Reading from the N-terminus, the 64-residue chain is MKRSKTLRAADAKVDREKLYAPLEAVRLAKETSTTKFDATVEVAFRLGVDPRKADQMVRGTVNL.

Belongs to the universal ribosomal protein uL1 family. As to quaternary structure, part of the 50S ribosomal subunit.

Its function is as follows. Binds directly to 23S rRNA. The L1 stalk is quite mobile in the ribosome, and is involved in E site tRNA release. In terms of biological role, protein L1 is also a translational repressor protein, it controls the translation of the L11 operon by binding to its mRNA. The sequence is that of Large ribosomal subunit protein uL1 (rplA) from Streptomyces lavendulae.